The primary structure comprises 189 residues: Signal peptidase complex catalytic subunit sec11 (189 aa).

The Cytoplasmic segment spans residues 1–8 (MQKLSFRQ). Residues 9–25 (GLAQILNLLLVLSSAYM) traverse the membrane as a helical; Signal-anchor for type II membrane protein segment. Topologically, residues 26–189 (GYKTLSFVTD…LLTLIQKEEQ (164 aa)) are lumenal. Active-site charge relay system residues include Ser-47 and His-104. An N-linked (GlcNAc...) asparagine glycan is attached at Asn-114. The active-site Charge relay system is the Asp-129. A C-terminal short (CTS) helix region spans residues 173–184 (IMLGGLGLLTLI).

Belongs to the peptidase S26B family. In terms of assembly, component of the signal peptidase complex (SPC) composed of a catalytic subunit sec11 and three accessory subunits spc1, spc2 and spc3. The complex induces a local thinning of the ER membrane which is used to measure the length of the signal peptide (SP) h-region of protein substrates. This ensures the selectivity of the complex towards h-regions shorter than 18-20 amino acids. SPC associates with the translocon complex.

It is found in the endoplasmic reticulum membrane. It carries out the reaction Cleavage of hydrophobic, N-terminal signal or leader sequences from secreted and periplasmic proteins.. Its function is as follows. Catalytic component of the signal peptidase complex (SPC) which catalyzes the cleavage of N-terminal signal sequences from nascent proteins as they are translocated into the lumen of the endoplasmic reticulum. Specifically cleaves N-terminal signal peptides that contain a hydrophobic alpha-helix (h-region) shorter than 18-20 amino acids. The polypeptide is Signal peptidase complex catalytic subunit sec11 (sec11) (Schizosaccharomyces pombe (strain 972 / ATCC 24843) (Fission yeast)).